The following is a 466-amino-acid chain: Anthocyanidin 3-O-glucosyltransferase 1 (466 aa).

His-22 (proton acceptor) is an active-site residue. Residues His-22 and Gln-87 each contribute to the an anthocyanidin site. Catalysis depends on Asp-122, which acts as the Charge relay. Residue Thr-145 participates in UDP-alpha-D-glucose binding. An an anthocyanidin-binding site is contributed by His-154. UDP-alpha-D-glucose is bound by residues Ala-346, Gln-348, His-363, Trp-366, Asn-367, Ser-368, and Glu-371. Gly-386 is a binding site for an anthocyanidin. UDP-alpha-D-glucose-binding residues include Asp-387 and Gln-388.

Belongs to the UDP-glycosyltransferase family. As to expression, highest expression detected in receptacles and achenes, with very low levels detected in runners, leaves, flowers, crowns and green receptacles.

The enzyme catalyses an anthocyanidin + UDP-alpha-D-glucose + H(+) = an anthocyanidin 3-O-beta-D-glucoside + UDP. The catalysed reaction is cyanidin + UDP-alpha-D-glucose = cyanidin 3-O-beta-D-glucoside + UDP + H(+). It carries out the reaction pelargonidin + UDP-alpha-D-glucose = pelargonidin 3-O-beta-D-glucoside + UDP. It catalyses the reaction peonidin + UDP-alpha-D-glucose = peonidin 3-O-beta-D-glucoside + UDP. The enzyme catalyses delphinidin + UDP-alpha-D-glucose = delphinidin 3-O-beta-D-glucoside + UDP. The catalysed reaction is a flavonol + UDP-alpha-D-glucose = a flavonol 3-O-beta-D-glucoside + UDP + H(+). It functions in the pathway pigment biosynthesis; anthocyanin biosynthesis. In the presence of other necessary color factors, this glycosylation reaction allows the accumulation of anthocyanin pigments. Uses UDP-Glc as a sugar donor, but not UDP-Gal or UDP-GlcUA. Anthocyanidins are the preferred substrates in vivo, but flavonols can also be glucosylated in vitro. The protein is Anthocyanidin 3-O-glucosyltransferase 1 of Fragaria ananassa (Strawberry).